Consider the following 88-residue polypeptide: Large ribosomal subunit protein bL27 (88 aa).

The tract at residues 1-23 (MAHKKAGGSSRNGRDSAGRRLGV) is disordered.

It belongs to the bacterial ribosomal protein bL27 family.

The sequence is that of Large ribosomal subunit protein bL27 from Methylorubrum populi (strain ATCC BAA-705 / NCIMB 13946 / BJ001) (Methylobacterium populi).